The primary structure comprises 681 residues: Propionyl-CoA carboxylase alpha chain (681 aa).

Residues 1-466 form the Biotin carboxylation domain; the sequence is MFNKILIANR…TTAFIAEEYP (466 aa). Residues Lys-116, 148-209, Glu-200, and Asn-235 contribute to the ATP site; that span reads SNQI…PRHI. The 198-residue stretch at 120–317 folds into the ATP-grasp domain; it reads KKIAQEANVS…LVEQMIRVAA (198 aa). Mg(2+)-binding residues include Glu-275, Glu-288, and Asn-290. Glu-275, Glu-288, and Asn-290 together coordinate Mn(2+). Glu-288 is an active-site residue. Phe-348 is a biotin binding site. The Biotinyl-binding domain maps to 602–681; it reads LMPEKLPPDT…AVDDVIMEFE (80 aa). Lys-647 bears the N6-biotinyllysine mark.

The holoenzyme is a dodecamer composed of 6 PccA/alpha subunits and 6 PccB/beta subunits. Mg(2+) is required as a cofactor. Requires Mn(2+) as cofactor. It depends on biotin as a cofactor. Post-translationally, the biotin cofactor is covalently attached to the C-terminal biotinyl-binding domain and is required for the catalytic activity.

The catalysed reaction is propanoyl-CoA + hydrogencarbonate + ATP = (S)-methylmalonyl-CoA + ADP + phosphate + H(+). Its pathway is metabolic intermediate metabolism; propanoyl-CoA degradation; succinyl-CoA from propanoyl-CoA: step 1/3. This is one of the 2 subunits of the biotin-dependent propionyl-CoA carboxylase (PCC), the enzyme catalyzing the carboxylation of propionyl-CoA/propanoyl-CoA to D-methylmalonyl-CoA/(S)-methylmalonyl-CoA. Within the holoenzyme, the alpha subunit catalyzes the ATP-dependent carboxylation of the biotin carried by the biotin carboxyl carrier (BCC) domain, while the beta subunit then tranfers the carboxyl group from carboxylated biotin to propionyl-CoA. This Ruegeria pomeroyi (strain ATCC 700808 / DSM 15171 / DSS-3) (Silicibacter pomeroyi) protein is Propionyl-CoA carboxylase alpha chain.